A 241-amino-acid polypeptide reads, in one-letter code: Ras-like protein 1 (241 aa).

GTP is bound by residues glycine 17–alanine 22, valine 33–threonine 39, alanine 63–glycine 64, asparagine 138–aspartate 141, and serine 168–lysine 170. The Effector region motif lies at tyrosine 36 to tyrosine 44. A disordered region spans residues arginine 190–leucine 241. The span at glutamine 191–lysine 205 shows a compositional bias: polar residues. Residues aspartate 219–lysine 230 show a composition bias toward basic and acidic residues. Residue cysteine 238 is modified to Cysteine methyl ester. A lipid anchor (S-farnesyl cysteine) is attached at cysteine 238. Residues valine 239 to leucine 241 constitute a propeptide, removed in mature form.

Belongs to the small GTPase superfamily. Ras family. Interacts with farnesyltransferase beta subunit RAM1.

It is found in the cell membrane. With respect to regulation, alternates between an inactive form bound to GDP and an active form bound to GTP. Activated by a guanine nucleotide-exchange factor (GEF) and inactivated by a GTPase-activating protein (GAP). In terms of biological role, modulates the activity of the adenylate cyclase catalytic subunit and therefore affects the biosynthesis of cyclic-AMP. Plays a role in both surface attachment and surface recognition of appressoria, a highly specialized infection structure for plant penetration. Regulates appressorium formation by coordinated regulation of cAMP signaling and Pmk1 MAPK pathways. The sequence is that of Ras-like protein 1 from Pyricularia oryzae (strain 70-15 / ATCC MYA-4617 / FGSC 8958) (Rice blast fungus).